Consider the following 103-residue polypeptide: Small ribosomal subunit protein uS10 (103 aa).

It belongs to the universal ribosomal protein uS10 family. In terms of assembly, part of the 30S ribosomal subunit.

Involved in the binding of tRNA to the ribosomes. This chain is Small ribosomal subunit protein uS10, found in Borreliella burgdorferi (strain ATCC 35210 / DSM 4680 / CIP 102532 / B31) (Borrelia burgdorferi).